Here is a 248-residue protein sequence, read N- to C-terminus: Homeobox protein CHOX-CAD (248 aa).

Residues 137–196 (KDKYRVVYTDHQRLELEKEFHYSRYITIRRKAELAAALGLTERQVKIWFQNRRAKERKVN) constitute a DNA-binding region (homeobox). Residues 192-248 (ERKVNKKKLQQQSQPTSTTTPTPPAVGTPGPMGTLCSGSAPSLVSSSPLTIKEEFMP) form a disordered region. Composition is skewed to low complexity over residues 201-211 (QQQSQPTSTTT) and 228-240 (SGSAPSLVSSSPL).

The protein belongs to the Caudal homeobox family.

The protein resides in the nucleus. May play an important role during the early steps of organogenesis. This is Homeobox protein CHOX-CAD (CHOX-CAD1) from Gallus gallus (Chicken).